The chain runs to 724 residues: Golgin subfamily A member 6-like protein 6 (724 aa).

Disordered stretches follow at residues 1–108 (MLMW…HQEA), 314–342 (QEEKIREQEEKMRRQEEMMWEKEEKMRRQ), 374–454 (MHEQ…EMWR), 517–548 (QEEMWREEEKMHEQEKIWEEEKRQEQEDKMWR), and 561–724 (WRQE…MQEH). The span at 15–29 (LPTHPHLPTHPHLPT) shows a compositional bias: basic residues. Residues 39-60 (MSKETRQSKLAEAKEQLTDHHP) are compositionally biased toward basic and acidic residues. Polar residues-rich tracts occupy residues 61–71 (QTNPSVGTAAS) and 79–91 (NNGTNPETTTSGG). Positions 94 to 108 (SPEDEQKASHQHQEA) are enriched in basic and acidic residues. Residues 164-686 (ELEQALSAVA…EKMWEQEEKM (523 aa)) adopt a coiled-coil conformation.

It belongs to the GOLGA6 family.

This Homo sapiens (Human) protein is Golgin subfamily A member 6-like protein 6 (GOLGA6L6).